Here is a 137-residue protein sequence, read N- to C-terminus: MRHYEIVFLVHPDQSEQVPGMIERYTGILTQAGGQIHRLEDWGRRQLAYPIIELHKAHYVLMNVETTAEAVEELETAFRFNDAVLRSMVMRTKAAITEASPMAKAKDERDTRRSSEERAPRAEATEEAEESAENTAE.

The disordered stretch occupies residues 96-137 (ITEASPMAKAKDERDTRRSSEERAPRAEATEEAEESAENTAE). Positions 104–124 (KAKDERDTRRSSEERAPRAEA) are enriched in basic and acidic residues. Positions 125–137 (TEEAEESAENTAE) are enriched in acidic residues.

Belongs to the bacterial ribosomal protein bS6 family.

Its function is as follows. Binds together with bS18 to 16S ribosomal RNA. This chain is Small ribosomal subunit protein bS6, found in Shewanella pealeana (strain ATCC 700345 / ANG-SQ1).